We begin with the raw amino-acid sequence, 313 residues long: Malate dehydrogenase (313 aa).

NAD(+) is bound by residues 8 to 13 (GAGNVG) and aspartate 33. The substrate site is built by arginine 83 and arginine 89. Residues asparagine 96 and 119-121 (ISN) each bind NAD(+). Asparagine 121 and arginine 152 together coordinate substrate. Residue histidine 176 is the Proton acceptor of the active site.

This sequence belongs to the LDH/MDH superfamily. MDH type 3 family.

The catalysed reaction is (S)-malate + NAD(+) = oxaloacetate + NADH + H(+). In terms of biological role, catalyzes the reversible oxidation of malate to oxaloacetate. This is Malate dehydrogenase from Parabacteroides distasonis (strain ATCC 8503 / DSM 20701 / CIP 104284 / JCM 5825 / NCTC 11152).